A 686-amino-acid polypeptide reads, in one-letter code: Translation initiation factor IF-2 (686 aa).

Positions 35-99 (MSTVEDETAE…EHGQKDTDRR (65 aa)) are disordered. Basic and acidic residues predominate over residues 50–68 (LQEEDKPEEKISKKEPDKK). Basic residues predominate over residues 69 to 79 (DRKKTKGKKQM). Over residues 87–99 (EGTEHGQKDTDRR) the composition is skewed to basic and acidic residues. In terms of domain architecture, tr-type G spans 186–355 (LRPPIVTVMG…LLVAEMEELK (170 aa)). The G1 stretch occupies residues 195–202 (GHVDHGKT). 195-202 (GHVDHGKT) contacts GTP. The interval 220-224 (GITQH) is G2. The segment at 241-244 (DTPG) is G3. GTP-binding positions include 241–245 (DTPGH) and 295–298 (NKVD). The segment at 295–298 (NKVD) is G4. The segment at 331–333 (SAL) is G5.

It belongs to the TRAFAC class translation factor GTPase superfamily. Classic translation factor GTPase family. IF-2 subfamily.

It is found in the cytoplasm. Its function is as follows. One of the essential components for the initiation of protein synthesis. Protects formylmethionyl-tRNA from spontaneous hydrolysis and promotes its binding to the 30S ribosomal subunits. Also involved in the hydrolysis of GTP during the formation of the 70S ribosomal complex. The chain is Translation initiation factor IF-2 from Halothermothrix orenii (strain H 168 / OCM 544 / DSM 9562).